The chain runs to 1078 residues: mRNA 3'-end-processing protein rna14 (1078 aa).

Disordered stretches follow at residues 15–209 (AMNA…DTPA) and 222–251 (QSEN…HDRV). Positions 42–55 (KTLQDQYSASILDS) are enriched in polar residues. The segment covering 58 to 68 (SEIAPSSASPS) has biased composition (low complexity). Positions 82–115 (DPSQPADSAYPSQTPSRADSQASVSAPASGTSVP) are enriched in polar residues. A compositionally biased stretch (acidic residues) spans 126-139 (VEDEDEDDAGDADY). Polar residues-rich tracts occupy residues 151–170 (NTIS…NEDT) and 190–206 (FPNS…SKSD). HAT repeat units follow at residues 280–312 (NRID…MESE), 314–345 (NELY…YVRR), 356–391 (QSRR…FIRS), 405–438 (QKMD…FEMG), 475–508 (TTLP…WEKG), and 520–552 (AFKA…FCFL). Disordered stretches follow at residues 632–663 (ETFA…ESMK) and 851–950 (PTVV…QGSP). Positions 879-894 (GTPSSRYPDASVTNSP) are enriched in polar residues. The segment covering 896-907 (RPLEDFDDEMNR) has biased composition (basic and acidic residues). The segment covering 931-949 (RTQQVISNQTGSQFRSQGS) has biased composition (polar residues).

It is found in the nucleus. It localises to the cytoplasm. Component of the cleavage factor IA (CFIA) complex, which is involved in the endonucleolytic cleavage during polyadenylation-dependent pre-mRNA 3'-end formation. The polypeptide is mRNA 3'-end-processing protein rna14 (rna14) (Aspergillus oryzae (strain ATCC 42149 / RIB 40) (Yellow koji mold)).